The sequence spans 271 residues: Catechol O-methyltransferase (271 aa).

The Cytoplasmic segment spans residues Met-1–Pro-6. Residues Leu-7 to Leu-26 traverse the membrane as a helical; Signal-anchor for type II membrane protein segment. At Arg-27–Pro-271 the chain is on the extracellular side. S-adenosyl-L-methionine-binding positions include Val-92, Glu-114, Ser-122, Glu-140, Ile-141, Gly-167–Gln-170, Ser-169, and Asp-191. Asp-191 is a binding site for Mg(2+). Lys-194 serves as a coordination point for substrate. Mg(2+) is bound by residues Asp-219 and Asn-220. Positions 220 and 249 each coordinate substrate. Ser-267 is subject to Phosphoserine.

It belongs to the class I-like SAM-binding methyltransferase superfamily. Cation-dependent O-methyltransferase family. Mg(2+) serves as cofactor. The N-terminus is blocked. In terms of tissue distribution, brain, liver, placenta, lymphocytes and erythrocytes.

The protein resides in the cytoplasm. It localises to the cell membrane. It catalyses the reaction a catechol + S-adenosyl-L-methionine = a guaiacol + S-adenosyl-L-homocysteine + H(+). It carries out the reaction 2-hydroxyestrone + S-adenosyl-L-methionine = 2-hydroxy-3-methoxy-estrone + S-adenosyl-L-homocysteine + H(+). The enzyme catalyses 4-hydroxyestrone + S-adenosyl-L-methionine = 4-methoxyestrone + S-adenosyl-L-homocysteine + H(+). The catalysed reaction is 2-hydroxyestrone + S-adenosyl-L-methionine = 2-methoxyestrone + S-adenosyl-L-homocysteine + H(+). It catalyses the reaction 4-hydroxy-17beta-estradiol + S-adenosyl-L-methionine = 4-methoxy-17beta-estradiol + S-adenosyl-L-homocysteine + H(+). It carries out the reaction 2-hydroxy-17beta-estradiol + S-adenosyl-L-methionine = 2-hydroxy-3-methoxy-17beta-estradiol + S-adenosyl-L-homocysteine + H(+). The enzyme catalyses 2-hydroxy-17beta-estradiol + S-adenosyl-L-methionine = 2-methoxy-17beta-estradiol + S-adenosyl-L-homocysteine + H(+). In terms of biological role, catalyzes the O-methylation, and thereby the inactivation, of catecholamine neurotransmitters and catechol hormones. Also shortens the biological half-lives of certain neuroactive drugs, like L-DOPA, alpha-methyl DOPA and isoproterenol. The sequence is that of Catechol O-methyltransferase from Homo sapiens (Human).